We begin with the raw amino-acid sequence, 360 residues long: MEDFNMESDSFEDFWKGEDLSNYSYSSTLPPFLLDAAPCEPESLEINKYFVVIIYALVFLLSLLGNSLVMLVILYSRVGRSVTDVYLLNLALADLLFALTLPIWAASKVNGWIFGTFLCKVVSLLKEVNFYSGILLLACISVDRYLAIVHATRTLTQKRYLVKFICLSIWGLSLLLALPVLLFRRTVYSSNVSPACYEDMGNNTANWRMLLRILPQSFGFIVPLLIMLFCYGFTLRTLFKAHMGQKHRAMRVIFAVVLIFLLCWLPYNLVLLADTLMRTQVIQETCERRNHIDRALDATEILGILHSCLNPLIYAFIGQKFRHGLLKILAIHGLISKDSLPKDSRPSFVGSSSGHTSTTL.

Residues M1–K48 lie on the Extracellular side of the membrane. N-linked (GlcNAc...) asparagine glycosylation is present at N22. The helical transmembrane segment at Y49–Y75 threads the bilayer. The Cytoplasmic portion of the chain corresponds to S76–D84. Residues V85–A105 form a helical membrane-spanning segment. Residues A106–K120 are Extracellular-facing. Cysteines 119 and 196 form a disulfide. Residues V121 to V142 form a helical membrane-spanning segment. The Cytoplasmic portion of the chain corresponds to D143–K163. A helical transmembrane segment spans residues F164–F183. Residues R184–R208 lie on the Extracellular side of the membrane. Residues M209–Y231 traverse the membrane as a helical segment. The Cytoplasmic portion of the chain corresponds to G232–R251. The chain crosses the membrane as a helical span at residues V252–A273. The Extracellular segment spans residues D274–R294. The chain crosses the membrane as a helical span at residues A295–A315. At F316–L360 the chain is on the cytoplasmic side. S347, S351, S352, and S353 each carry phosphoserine.

Belongs to the G-protein coupled receptor 1 family. In terms of assembly, interacts with IL8. Interacts with GNAI2. In terms of processing, phosphorylated upon ligand binding; which is required for desensitization. Post-translationally, (Microbial infection) Proteolytically cleaved by Staphylococcus aureus staphopain A/SspP. This cleavage inhibits CXCR2-dependent neutrophil activation and chemotaxis.

The protein localises to the cell membrane. Its function is as follows. Receptor for interleukin-8 which is a powerful neutrophil chemotactic factor. Binding of IL-8 to the receptor causes activation of neutrophils. This response is mediated via a G-protein that activates a phosphatidylinositol-calcium second messenger system. Binds to IL-8 with high affinity. Also binds with high affinity to CXCL3, GRO/MGSA and NAP-2. The sequence is that of C-X-C chemokine receptor type 2 (CXCR2) from Homo sapiens (Human).